Reading from the N-terminus, the 109-residue chain is T cell receptor alpha variable 26-2 (109 aa).

The signal sequence occupies residues 1-19; it reads MKLVTSITVLLSLGIMGDA. The 90-residue stretch at 20–109 folds into the Ig-like domain; it reads KTTQPNSMES…AAVYYCILRD (90 aa). C39 and C105 are disulfide-bonded. An N-linked (GlcNAc...) asparagine glycan is attached at N40.

In terms of assembly, alpha-beta TR is a heterodimer composed of an alpha and beta chain; disulfide-linked. The alpha-beta TR is associated with the transmembrane signaling CD3 coreceptor proteins to form the TR-CD3 (TcR or TCR). The assembly of alpha-beta TR heterodimers with CD3 occurs in the endoplasmic reticulum where a single alpha-beta TR heterodimer associates with one CD3D-CD3E heterodimer, one CD3G-CD3E heterodimer and one CD247 homodimer forming a stable octameric structure. CD3D-CD3E and CD3G-CD3E heterodimers preferentially associate with TR alpha and TR beta chains, respectively. The association of the CD247 homodimer is the last step of TcR assembly in the endoplasmic reticulum and is required for transport to the cell surface.

The protein localises to the cell membrane. In terms of biological role, v region of the variable domain of T cell receptor (TR) alpha chain that participates in the antigen recognition. Alpha-beta T cell receptors are antigen specific receptors which are essential to the immune response and are present on the cell surface of T lymphocytes. Recognize peptide-major histocompatibility (MH) (pMH) complexes that are displayed by antigen presenting cells (APC), a prerequisite for efficient T cell adaptive immunity against pathogens. Binding of alpha-beta TR to pMH complex initiates TR-CD3 clustering on the cell surface and intracellular activation of LCK that phosphorylates the ITAM motifs of CD3G, CD3D, CD3E and CD247 enabling the recruitment of ZAP70. In turn ZAP70 phosphorylates LAT, which recruits numerous signaling molecules to form the LAT signalosome. The LAT signalosome propagates signal branching to three major signaling pathways, the calcium, the mitogen-activated protein kinase (MAPK) kinase and the nuclear factor NF-kappa-B (NF-kB) pathways, leading to the mobilization of transcription factors that are critical for gene expression and essential for T cell growth and differentiation. The T cell repertoire is generated in the thymus, by V-(D)-J rearrangement. This repertoire is then shaped by intrathymic selection events to generate a peripheral T cell pool of self-MH restricted, non-autoaggressive T cells. Post-thymic interaction of alpha-beta TR with the pMH complexes shapes TR structural and functional avidity. The polypeptide is T cell receptor alpha variable 26-2 (Homo sapiens (Human)).